Consider the following 392-residue polypeptide: Leucine-rich repeat-containing protein 74B (392 aa).

The interval 24 to 46 (RLSGVPEAEQGPEANWDSDLETE) is disordered. LRR repeat units lie at residues 106–129 (NPYV…ALAG), 134–157 (SSSI…ALCA), 162–185 (NQAM…HLAE), 192–213 (DLKS…TLGP), 220–241 (GLTE…AFAR), 248–269 (FLKV…AVGE), 276–297 (VLEE…SLGL), 304–325 (TLRI…GLLK), and 334–356 (ALEL…ASSV).

The protein is Leucine-rich repeat-containing protein 74B of Homo sapiens (Human).